A 537-amino-acid chain; its full sequence is uncharacterized protein (537 aa).

Disordered stretches follow at residues 1–33, 71–98, 197–220, and 516–537; these read MEPG…ILAF, SSPP…RKRQ, SHNN…SEEK, and GRQR…EEQN. S72 carries the phosphoserine modification. Residues 88-98 are compositionally biased toward basic and acidic residues; the sequence is SRVDSEARKRQ. Positions 197–214 are enriched in polar residues; that stretch reads SHNNMASSNTQSNTQLSE. Positions 516-529 are enriched in basic residues; the sequence is GRQRSSRYKSHVHK.

This sequence belongs to the NAD kinase family.

This is an uncharacterized protein from Schizosaccharomyces pombe (strain 972 / ATCC 24843) (Fission yeast).